Here is a 123-residue protein sequence, read N- to C-terminus: MPTINQLIRQGREKKRDKSTAPALKSCPQKRGVCTRVYTTTPKKPNSALRKVARVRLTNGIEVTSYIPGVGHNLQEHSVVLIRGGRVKDLPGVRYHIVRGTLDSVGVKGRMQGRSKYGAKRPK.

D89 is subject to 3-methylthioaspartic acid.

The protein belongs to the universal ribosomal protein uS12 family. As to quaternary structure, part of the 30S ribosomal subunit. Contacts proteins S8 and S17. May interact with IF1 in the 30S initiation complex.

In terms of biological role, with S4 and S5 plays an important role in translational accuracy. Interacts with and stabilizes bases of the 16S rRNA that are involved in tRNA selection in the A site and with the mRNA backbone. Located at the interface of the 30S and 50S subunits, it traverses the body of the 30S subunit contacting proteins on the other side and probably holding the rRNA structure together. The combined cluster of proteins S8, S12 and S17 appears to hold together the shoulder and platform of the 30S subunit. The polypeptide is Small ribosomal subunit protein uS12 (Trichlorobacter lovleyi (strain ATCC BAA-1151 / DSM 17278 / SZ) (Geobacter lovleyi)).